The following is a 364-amino-acid chain: Dihydroorotate dehydrogenase (quinone) (364 aa).

FMN-binding positions include 78-82 (AGFDK) and threonine 102. Lysine 82 contributes to the substrate binding site. 127 to 131 (NRMGF) is a binding site for substrate. 2 residues coordinate FMN: asparagine 156 and asparagine 189. Asparagine 189 is a substrate binding site. Serine 192 functions as the Nucleophile in the catalytic mechanism. Asparagine 194 contributes to the substrate binding site. Positions 227 and 255 each coordinate FMN. 256–257 (NT) contributes to the substrate binding site. Residues glycine 285, glycine 314, and 335 to 336 (YT) contribute to the FMN site.

It belongs to the dihydroorotate dehydrogenase family. Type 2 subfamily. Monomer. It depends on FMN as a cofactor.

The protein resides in the cell membrane. It carries out the reaction (S)-dihydroorotate + a quinone = orotate + a quinol. It functions in the pathway pyrimidine metabolism; UMP biosynthesis via de novo pathway; orotate from (S)-dihydroorotate (quinone route): step 1/1. In terms of biological role, catalyzes the conversion of dihydroorotate to orotate with quinone as electron acceptor. This is Dihydroorotate dehydrogenase (quinone) from Thermosynechococcus vestitus (strain NIES-2133 / IAM M-273 / BP-1).